The following is a 186-amino-acid chain: Quinone reductase (186 aa).

Residues 13 to 20, 80 to 83, and Ser-116 contribute to the FMN site; these read SLRKESYN and EHNR.

It belongs to the SsuE family. As to quaternary structure, homotetramer. Dimer of dimers. The tetrameric configuration has a central role in chromate reductase activity. FMN serves as cofactor.

It carries out the reaction a quinone + NADH + H(+) = a quinol + NAD(+). It catalyses the reaction a quinone + NADPH + H(+) = a quinol + NADP(+). The catalysed reaction is Cr(6+) + 2 NADH + O2 = Cr(3+) + superoxide + 2 NAD(+) + 2 H(+). The enzyme catalyses Cr(6+) + 2 NADPH + O2 = Cr(3+) + superoxide + 2 NADP(+) + 2 H(+). With respect to regulation, non-competitively inhibited by sulfate. Catalyzes the reduction of quinones. Acts by simultaneous two-electron transfer, avoiding formation of highly reactive semiquinone intermediates and producing quinols that promote tolerance of H(2)O(2). Quinone reduction is probably the primary biological role of ChrR. Can also reduce toxic chromate to insoluble and less toxic Cr(3+). Catalyzes the transfer of three electrons to Cr(6+) producing Cr(3+) and one electron to molecular oxygen. This reaction produces transiently a minimal amount of the toxic Cr(5+) species and reactive oxygen species (ROS). Chromate reduction protects the cell against chromate toxicity, but is likely a secondary activity. In Pseudomonas putida (Arthrobacter siderocapsulatus), this protein is Quinone reductase (chrR).